A 392-amino-acid chain; its full sequence is Phosphoglycerate kinase (392 aa).

Substrate contacts are provided by residues 21 to 23 (DLN), R36, 59 to 62 (HLGR), R114, and R147. ATP is bound by residues K198, E320, and 346–349 (GGDT).

The protein belongs to the phosphoglycerate kinase family. Monomer.

The protein resides in the cytoplasm. The enzyme catalyses (2R)-3-phosphoglycerate + ATP = (2R)-3-phospho-glyceroyl phosphate + ADP. Its pathway is carbohydrate degradation; glycolysis; pyruvate from D-glyceraldehyde 3-phosphate: step 2/5. This is Phosphoglycerate kinase from Nitrosomonas eutropha (strain DSM 101675 / C91 / Nm57).